A 373-amino-acid chain; its full sequence is 4-hydroxy-3-methylbut-2-en-1-yl diphosphate synthase (flavodoxin) (373 aa).

4 residues coordinate [4Fe-4S] cluster: C270, C273, C305, and E312.

It belongs to the IspG family. It depends on [4Fe-4S] cluster as a cofactor.

It carries out the reaction (2E)-4-hydroxy-3-methylbut-2-enyl diphosphate + oxidized [flavodoxin] + H2O + 2 H(+) = 2-C-methyl-D-erythritol 2,4-cyclic diphosphate + reduced [flavodoxin]. It functions in the pathway isoprenoid biosynthesis; isopentenyl diphosphate biosynthesis via DXP pathway; isopentenyl diphosphate from 1-deoxy-D-xylulose 5-phosphate: step 5/6. Its function is as follows. Converts 2C-methyl-D-erythritol 2,4-cyclodiphosphate (ME-2,4cPP) into 1-hydroxy-2-methyl-2-(E)-butenyl 4-diphosphate. The protein is 4-hydroxy-3-methylbut-2-en-1-yl diphosphate synthase (flavodoxin) of Pectobacterium atrosepticum (strain SCRI 1043 / ATCC BAA-672) (Erwinia carotovora subsp. atroseptica).